We begin with the raw amino-acid sequence, 509 residues long: Aspartyl/glutamyl-tRNA(Asn/Gln) amidotransferase subunit B (509 aa).

The protein belongs to the GatB/GatE family. GatB subfamily. In terms of assembly, heterotrimer of A, B and C subunits.

It carries out the reaction L-glutamyl-tRNA(Gln) + L-glutamine + ATP + H2O = L-glutaminyl-tRNA(Gln) + L-glutamate + ADP + phosphate + H(+). It catalyses the reaction L-aspartyl-tRNA(Asn) + L-glutamine + ATP + H2O = L-asparaginyl-tRNA(Asn) + L-glutamate + ADP + phosphate + 2 H(+). In terms of biological role, allows the formation of correctly charged Asn-tRNA(Asn) or Gln-tRNA(Gln) through the transamidation of misacylated Asp-tRNA(Asn) or Glu-tRNA(Gln) in organisms which lack either or both of asparaginyl-tRNA or glutaminyl-tRNA synthetases. The reaction takes place in the presence of glutamine and ATP through an activated phospho-Asp-tRNA(Asn) or phospho-Glu-tRNA(Gln). The polypeptide is Aspartyl/glutamyl-tRNA(Asn/Gln) amidotransferase subunit B (Mycobacterium leprae (strain Br4923)).